A 153-amino-acid chain; its full sequence is 3-hydroxyacyl-[acyl-carrier-protein] dehydratase FabZ (153 aa).

The active site involves His54.

This sequence belongs to the thioester dehydratase family. FabZ subfamily.

Its subcellular location is the cytoplasm. It carries out the reaction a (3R)-hydroxyacyl-[ACP] = a (2E)-enoyl-[ACP] + H2O. In terms of biological role, involved in unsaturated fatty acids biosynthesis. Catalyzes the dehydration of short chain beta-hydroxyacyl-ACPs and long chain saturated and unsaturated beta-hydroxyacyl-ACPs. The sequence is that of 3-hydroxyacyl-[acyl-carrier-protein] dehydratase FabZ from Chlamydia pneumoniae (Chlamydophila pneumoniae).